Reading from the N-terminus, the 313-residue chain is Methionyl-tRNA formyltransferase (313 aa).

111–114 (SLLP) provides a ligand contact to (6S)-5,6,7,8-tetrahydrofolate.

It belongs to the Fmt family.

It carries out the reaction L-methionyl-tRNA(fMet) + (6R)-10-formyltetrahydrofolate = N-formyl-L-methionyl-tRNA(fMet) + (6S)-5,6,7,8-tetrahydrofolate + H(+). Its function is as follows. Attaches a formyl group to the free amino group of methionyl-tRNA(fMet). The formyl group appears to play a dual role in the initiator identity of N-formylmethionyl-tRNA by promoting its recognition by IF2 and preventing the misappropriation of this tRNA by the elongation apparatus. This chain is Methionyl-tRNA formyltransferase, found in Mesoplasma florum (strain ATCC 33453 / NBRC 100688 / NCTC 11704 / L1) (Acholeplasma florum).